A 381-amino-acid polypeptide reads, in one-letter code: MSASRKTLVVTNDFPPRIGGIQSYLRDFIATQDPESIVVFASTQNAEEAHAYDKTLDYEVIRWPRSVMLPTPTTAHAMAEIIREREIDNVWFGAAAPLALMAGTAKQAGASKVIASTHGHEVGWSMLPGSRQSLRKIGTEVDVLTYISQYTLRRFKSAFGSHPTFEHLPSGVDVKRFTPATPEDKSATRKKLGFTDTTPVIACNSRLVPRKGQDSLIKAMPQVIAARPDAQLLIVGSGRYESTLRRLATDVSQNVKFLGRLEYQDMINTLAAADIFAMPARTRGGGLDVEGLGIVYLEAQACGVPVIAGTSGGAPETVTPATGLVVEGSDVDKLSELLIELLDDPIRRAAMGAAGRAHVEAEWSWEIMGERLTNILQSEPR.

Arginine 206, lysine 211, leucine 261, and glutamate 298 together coordinate GDP-alpha-D-mannose.

This sequence belongs to the glycosyltransferase group 1 family. Glycosyltransferase 4 subfamily.

The catalysed reaction is a 1,2-diacyl-sn-glycero-3-phospho-[alpha-D-mannopyranosyl-(1&lt;-&gt;6)-D-myo-inositol] + GDP-alpha-D-mannose = a 2,6-O-bis(alpha-D-mannopyranosyl)-1-phosphatidyl-1D-myo-inositol + GDP + H(+). The enzyme catalyses a 1,2-diacyl-sn-glycero-3-phospho-[alpha-D-6-acyl-mannopyranosyl-(1&lt;-&gt;6)-D-myo-inositol] + GDP-alpha-D-mannose = a 2-O-(alpha-D-mannosyl)-6-O-(6-O-acyl-alpha-D-mannosyl)-1-phosphatidyl-1D-myo-inositol + GDP + H(+). It functions in the pathway phospholipid metabolism; phosphatidylinositol metabolism. Involved in the biosynthesis of phosphatidyl-myo-inositol mannosides (PIM) which are early precursors in the biosynthesis of lipomannans (LM) and lipoarabinomannans (LAM). Catalyzes the addition of a mannosyl residue from GDP-D-mannose (GDP-Man) to the position 6 of a phosphatidyl-myo-inositol bearing an alpha-1,2-linked mannose residue (PIM1) to generate phosphatidyl-myo-inositol bearing alpha-1,2- and alpha-1,6-linked mannose residues (Ac1PIM2). PimB also catalyzes the addition of a mannosyl residue from GDP-Man to the position 6 of phosphatidyl-myo-inositol bearing an acylated alpha-1,2-linked mannose residue (Ac1PIM1) to generate monoacylated phosphatidyl-myo-inositol bearing alpha-1,2- and alpha-1,6-linked mannose residues (Ac1PIM2). The addition of the second mannosyl residue by PimB preferentially occurs before the acylation of the mannosyl residue transferred by PimA. Also able to transfer a mannosyl residue from GDP-Man to the position 6 of a phosphatidyl-myo-inositol (PI), but this reaction is very slow. This is GDP-mannose-dependent monoacylated alpha-(1-6)-phosphatidylinositol monomannoside mannosyltransferase from Corynebacterium glutamicum (strain ATCC 13032 / DSM 20300 / JCM 1318 / BCRC 11384 / CCUG 27702 / LMG 3730 / NBRC 12168 / NCIMB 10025 / NRRL B-2784 / 534).